An 89-amino-acid chain; its full sequence is MKTLLLTLVVVTIMCLDLGYTLTCYKGRDRSSETCRSEQELCCTKTWCDQWCQDRGPRLEMGCTATCPRRMPGLDFTCCTTDNCNPVPT.

Residues 1-21 form the signal peptide; sequence MKTLLLTLVVVTIMCLDLGYT. 5 cysteine pairs are disulfide-bonded: cysteine 24/cysteine 42, cysteine 35/cysteine 63, cysteine 48/cysteine 52, cysteine 67/cysteine 78, and cysteine 79/cysteine 84.

Belongs to the three-finger toxin family. Long-chain subfamily. Type II alpha-neurotoxin sub-subfamily. As to expression, expressed by the venom gland.

It localises to the secreted. Its function is as follows. Binds with high affinity to muscular (alpha-1/CHRNA1) and neuronal (alpha-7/CHRNA7) nicotinic acetylcholine receptor (nAChR) and inhibits acetylcholine from binding to the receptor, thereby impairing neuromuscular and neuronal transmission. The chain is Long neurotoxin homolog Pa ID from Pseudechis australis (Mulga snake).